Here is a 216-residue protein sequence, read N- to C-terminus: 3-isopropylmalate dehydratase small subunit 2 (216 aa).

This sequence belongs to the LeuD family. LeuD type 1 subfamily. As to quaternary structure, heterodimer of LeuC and LeuD.

It catalyses the reaction (2R,3S)-3-isopropylmalate = (2S)-2-isopropylmalate. It participates in amino-acid biosynthesis; L-leucine biosynthesis; L-leucine from 3-methyl-2-oxobutanoate: step 2/4. Catalyzes the isomerization between 2-isopropylmalate and 3-isopropylmalate, via the formation of 2-isopropylmaleate. The protein is 3-isopropylmalate dehydratase small subunit 2 of Bordetella pertussis (strain Tohama I / ATCC BAA-589 / NCTC 13251).